A 100-amino-acid polypeptide reads, in one-letter code: Small ribosomal subunit protein uS14 (100 aa).

The protein belongs to the universal ribosomal protein uS14 family. Part of the 30S ribosomal subunit. Contacts proteins S3 and S10.

In terms of biological role, binds 16S rRNA, required for the assembly of 30S particles and may also be responsible for determining the conformation of the 16S rRNA at the A site. The polypeptide is Small ribosomal subunit protein uS14 (Prochlorococcus marinus (strain MIT 9303)).